Reading from the N-terminus, the 392-residue chain is Serine protease ea (392 aa).

The first 19 residues, 1 to 19 (MLKPSIICLFLGILAKSSA), serve as a signal peptide directing secretion. The propeptide at 20–127 (GQFYFPNEAA…GQCGNILSNR (108 aa)) is activation peptide. Residues 36–89 (RCITPNRERALCIHLEDCKYLYGLLTTTPLRDTDRLYLSRSQCGYTNGKVLICC) form the Clip domain. 3 disulfides stabilise this stretch: cysteine 37-cysteine 88, cysteine 47-cysteine 78, and cysteine 53-cysteine 89. Residue asparagine 107 is glycosylated (N-linked (GlcNAc...) asparagine). Cystine bridges form between cysteine 120–cysteine 260, cysteine 158–cysteine 174, cysteine 202–cysteine 212, cysteine 307–cysteine 324, and cysteine 334–cysteine 367. In terms of domain architecture, Peptidase S1 spans 128–391 (IYGGMKTKID…YVDWIQNTIE (264 aa)). The active-site Charge relay system is the histidine 173. 4 residues coordinate Ca(2+): glutamate 193, aspartate 195, threonine 198, and aspartate 201. Aspartate 240 serves as the catalytic Charge relay system. The active-site Charge relay system is the serine 338.

The protein belongs to the peptidase S1 family. CLIP subfamily. As to quaternary structure, interacts with Spn27A; the two proteins are covalently linked leading to inhibition of ea catalytic activity. Interacts (via Peptidase domain) with snk (via N-terminal prodomain); leads to proteolytic activation of ea by snk. Sulfation of a vitelline membrane component by pip is required for proteolytic cleavage of ea by snk but not for the interaction of ea with snk. Post-translationally, proteolytically cleaved by snk. Activation peptide and active catalytic domain remain associated by a disulfide bond. Processed ea/easter is present in extremely low amounts in the early embryo as it is rapidly converted into a high molecular mass complex made up of ea covalently bound to the serpin Spn27A. Zymogen activation is also controlled by a negative feedback loop from Dorsal.

Its subcellular location is the secreted. Activated proteolytically by snk; activation requires both activation of the ndl-gd-snk protease cascade and sulfation of a vitelline membrane component by pip. Inhibited by binding of the serpin Spn27A. In terms of biological role, component of the extracellular signaling pathway that establishes the dorsal-ventral pathway of the embryo. A protease cascade involving ndl, gd, snk and ea results in activation of the spz Toll receptor ligand; acts downstream of ndl, gd and snk and is required for proteolytic processing of spz. Activation of ea requires both activation of the ndl-gd-snk protease cascade and sulfation of a vitelline membrane component by pip. Localized activation of the Toll receptor in the ventral region of the embryo defines cell identities along the dorsal-ventral continuum. The protein is Serine protease ea of Drosophila melanogaster (Fruit fly).